Reading from the N-terminus, the 271-residue chain is MPELPEVEVTRQGIAPYLVEQTVIDLVIRNGSLRWPVPDIAKQIIGQVIRQVRRRAKYLLIDTDAGTSIVHLGMSGSLRILPHDTPVEKHDHIDLVLANGRILRFNDPRRFGAWLWCELPEEAHPLLAKLGPEPLTNAFNVKQLAAALTGKKKAIKLCLMDNHIVVGVGNIYANEALFAAGIHPEAEAGKIDIERLTVLVAEVKQILAHAIKQGGTTLKDFTNADGKPGYFAQKLHVYGRGGETCTSCGNLLSEIRLGQRTTVFCGICQTR.

Residue proline 2 is the Schiff-base intermediate with DNA of the active site. The Proton donor role is filled by glutamate 3. Lysine 57 (proton donor; for beta-elimination activity) is an active-site residue. Residues histidine 90, arginine 109, and lysine 151 each coordinate DNA. An FPG-type zinc finger spans residues 236–270; it reads HVYGRGGETCTSCGNLLSEIRLGQRTTVFCGICQT. Arginine 260 acts as the Proton donor; for delta-elimination activity in catalysis.

Belongs to the FPG family. Monomer. Zn(2+) serves as cofactor.

The catalysed reaction is Hydrolysis of DNA containing ring-opened 7-methylguanine residues, releasing 2,6-diamino-4-hydroxy-5-(N-methyl)formamidopyrimidine.. The enzyme catalyses 2'-deoxyribonucleotide-(2'-deoxyribose 5'-phosphate)-2'-deoxyribonucleotide-DNA = a 3'-end 2'-deoxyribonucleotide-(2,3-dehydro-2,3-deoxyribose 5'-phosphate)-DNA + a 5'-end 5'-phospho-2'-deoxyribonucleoside-DNA + H(+). Involved in base excision repair of DNA damaged by oxidation or by mutagenic agents. Acts as a DNA glycosylase that recognizes and removes damaged bases. Has a preference for oxidized purines, such as 7,8-dihydro-8-oxoguanine (8-oxoG). Has AP (apurinic/apyrimidinic) lyase activity and introduces nicks in the DNA strand. Cleaves the DNA backbone by beta-delta elimination to generate a single-strand break at the site of the removed base with both 3'- and 5'-phosphates. This is Formamidopyrimidine-DNA glycosylase from Shewanella sp. (strain W3-18-1).